A 1429-amino-acid chain; its full sequence is Probable ATP-dependent RNA helicase spindle-E (1429 aa).

The region spanning 121–288 is the Helicase ATP-binding domain; sequence VNAINTHQVV…FSTKVSVPPV (168 aa). Position 134-141 (134-141) interacts with ATP; it reads GETGCGKT. The DEAH box signature appears at 234–237; that stretch reads DEVH. One can recognise a Helicase C-terminal domain in the interval 349–521; it reads QSEQSYDDAK…NSVLKAKLLD (173 aa). Residues 933-996 form the Tudor domain; the sequence is AGVLTKGMMV…RLMTKELLSQ (64 aa).

This sequence belongs to the DEAD box helicase family. DEAH subfamily.

The protein resides in the cytoplasm. The catalysed reaction is ATP + H2O = ADP + phosphate + H(+). Functionally, probable ATP-binding RNA helicase which plays a central role during spermatogenesis and oogenesis by repressing transposable elements and preventing their mobilization, which is essential for the germline integrity. Acts via the piRNA metabolic process, which mediates the repression of transposable elements during meiosis by forming complexes composed of piRNAs and Piwi and govern the methylation and subsequent repression of transposons. Involved in the repression of LTR retrotransposon copia. Also involved in telomere regulation by repressing specialized telomeric retroelements HeT-A, TAHRE, and TART; Drosophila telomeres being maintained by transposition of specialized telomeric retroelements. Involved in telomeric trans-silencing, a repression mechanism by which a transposon or a transgene inserted in subtelomeric heterochromatin has the capacity to repress in trans in the female germline, a homologous transposon, or transgene located in euchromatin. Involved in the repression of testis-expressed Stellate genes by the homologous Su(Ste) repeats. Required for anteroposterior and dorsoventral axis formation during oogenesis. The polypeptide is Probable ATP-dependent RNA helicase spindle-E (spn-E) (Drosophila ananassae (Fruit fly)).